The sequence spans 40 residues: YDLSKNCRLRGGICYIGKCPRRFFRSGSCSRGNVCCLRFG.

Cystine bridges form between Cys7-Cys35, Cys14-Cys29, and Cys19-Cys36. Gly40 carries the glycine amide modification.

As to quaternary structure, monomer. Homodimer.

The protein resides in the secreted. It localises to the membrane. In terms of biological role, has antimicrobial activity against the Gram-positive bacteria methicillin-resistant S.aureus ATCC 33591 and L.monocytogenes EGD, the Gram-negative bacterium E.coli ML53p and the yeast C.albicans 820. Has no hemolytic activity towards human erythrocytes. The chain is Beta-defensin 1 from Emys orbicularis (European pond turtle).